Consider the following 727-residue polypeptide: Pre-B-cell leukemia transcription factor-interacting protein 1 (727 aa).

Positions 1 to 10 are enriched in polar residues; it reads MASCPDSDNS. The segment at 1-169 is disordered; the sequence is MASCPDSDNS…GREPSSSQPV (169 aa). Phosphoserine occurs at positions 131, 142, 143, and 144. T148 carries the phosphothreonine modification. S164 carries the post-translational modification Phosphoserine. Coiled-coil stretches lie at residues 270 to 350 and 377 to 405; these read FLLD…RGVD and DPSL…WQLL. Residues 446-456 show a composition bias toward polar residues; sequence QGINTGRSPND. 2 disordered regions span residues 446–565 and 694–727; these read QGIN…NSPD and LKKR…YHQG. Positions 473–563 are enriched in basic and acidic residues; it reads WGGKEKWRGG…QKHSWGKDNS (91 aa). A Nuclear localization signal motif is present at residues 486–506; that stretch reads QKAEHWKPRKEESGQERQRSW. S563 carries the phosphoserine modification. The Nuclear localization signal motif lies at 691 to 716; sequence DKALKKRSRKKEKHSWNPRVVGPREE. Positions 694 to 703 are enriched in basic residues; that stretch reads LKKRSRKKEK.

As to quaternary structure, interacts with ESR1, PBX1, PBX2 and PBX3. Interacts with TEX11.

It is found in the cytoplasm. Its subcellular location is the cytoskeleton. The protein resides in the nucleus. Its function is as follows. Regulator of pre-B-cell leukemia transcription factors (BPXs) function. Inhibits the binding of PBX1-HOX complex to DNA and blocks the transcriptional activity of E2A-PBX1. Tethers estrogen receptor-alpha (ESR1) to microtubules and allows them to influence estrogen receptors-alpha signaling. The sequence is that of Pre-B-cell leukemia transcription factor-interacting protein 1 (Pbxip1) from Mus musculus (Mouse).